The sequence spans 385 residues: MELQEVLHMNGGEGDASYAKNSSFNQLVLAKVKPVLEQCVGELLRANLPNINKCIKVADLGCASGPNTLLTVRDIVQSIDKVRQEMKNELERPTIQVFLTDLFQNDFNSVFMLLPSFYRKLEKENGRKIGSCLIAAMPGSFHGRLFPEESMHFLHSSYSLQFLSQVPSGLVTELGITANKRSIYSSKASPPPVQKAYLDQFTKDFTTFLRIRSEELLSRGRMLLTCICKGDEFDGPNTMDLLEMAINDLVVEGHLEEEKLDSFNVPIYAASVEELKCIVEEEGSFEILYLETFKLRYDAGFSIDDDCQVRSHSPEYSDEHARAAHVASLLRSVYEPILANHFGEAIIPDIFHRFATNAAKVIRLGKGFYNNLIISLAKKPEKSDI.

Positions 18, 62, 67, 101, 102, 140, and 141 each coordinate S-adenosyl-L-homocysteine. Caffeine contacts are provided by Tyr-158, Gln-161, and Phe-162. Asn-179 contributes to the Mg(2+) binding site. Thr-238 provides a ligand contact to caffeine. Positions 261, 263, and 264 each coordinate Mg(2+). Tyr-369 contacts caffeine.

Belongs to the methyltransferase superfamily. Type-7 methyltransferase family. Mg(2+) is required as a cofactor. As to expression, expressed in roots, stems, young and old leaves.

The protein operates within alkaloid biosynthesis. Its function is as follows. May be involved in the biosynthesis of caffeine. The polypeptide is Probable caffeine synthase 3 (Coffea arabica (Arabian coffee)).